The primary structure comprises 519 residues: NADH-quinone oxidoreductase subunit N (519 aa).

The next 13 helical transmembrane spans lie at 14 to 34 (LLPA…EVFL), 44 to 64 (AVLT…TMFE), 82 to 102 (FLTF…VSFL), 117 to 137 (LFAS…TLFV), 167 to 187 (FILG…LYGA), 209 to 229 (GLVY…VAAV), 249 to 269 (LMSV…FFMV), 278 to 298 (LLGL…LLAI), 307 to 327 (LAYS…ALFV), 359 to 379 (ILYY…IVSV), 407 to 427 (WAFA…TIGF), 431 to 451 (LLIF…VGVL), and 487 to 507 (LALV…GPIM).

It belongs to the complex I subunit 2 family. In terms of assembly, NDH-1 is composed of 14 different subunits. Subunits NuoA, H, J, K, L, M, N constitute the membrane sector of the complex.

The protein resides in the cell inner membrane. The enzyme catalyses a quinone + NADH + 5 H(+)(in) = a quinol + NAD(+) + 4 H(+)(out). In terms of biological role, NDH-1 shuttles electrons from NADH, via FMN and iron-sulfur (Fe-S) centers, to quinones in the respiratory chain. The immediate electron acceptor for the enzyme in this species is believed to be ubiquinone. Couples the redox reaction to proton translocation (for every two electrons transferred, four hydrogen ions are translocated across the cytoplasmic membrane), and thus conserves the redox energy in a proton gradient. This is NADH-quinone oxidoreductase subunit N from Myxococcus xanthus (strain DK1622).